Consider the following 436-residue polypeptide: Immediate-early phosphoprotein 57 (436 aa).

Positions 71 to 140 (VPKRERSKTP…TPSNQNPLTE (70 aa)) are disordered. A compositionally biased stretch (low complexity) spans 104 to 119 (QRPAPSARSRRPQPYS). The segment covering 127-138 (KPQSTPSNQNPL) has biased composition (polar residues).

This sequence belongs to the herpesviridae UL69 family.

Its subcellular location is the host nucleus. The protein localises to the host cytoplasm. In terms of biological role, acts at a post-transcriptional level to regulate viral gene expression. This is Immediate-early phosphoprotein 57 (57) from Alcelaphine herpesvirus 1 (strain C500) (AlHV-1).